A 46-amino-acid polypeptide reads, in one-letter code: Thymosin beta-a (46 aa).

Positions 21–30 (TNTAEKNTLP) are enriched in polar residues. Residues 21-46 (TNTAEKNTLPTKEDIDQEKKAAEGGK) form a disordered region. Positions 31–46 (TKEDIDQEKKAAEGGK) are enriched in basic and acidic residues.

It belongs to the thymosin beta family.

It localises to the cytoplasm. The protein resides in the cytoskeleton. In terms of biological role, plays an important role in the organization of the cytoskeleton. Binds to and sequesters actin monomers (G actin) and therefore inhibits actin polymerization. This Cyprinus carpio (Common carp) protein is Thymosin beta-a.